Reading from the N-terminus, the 196-residue chain is Aequorin-2 (196 aa).

Residues 1–7 (MTSKQYS) constitute a propeptide that is removed on maturation. EF-hand domains follow at residues 18-53 (RWIG…IVIN), 54-108 (NLGA…AKNE), 117-146 (DALF…AGII), and 147-182 (QSSE…FWYT). The Ca(2+) site is built by Asp-31, Asn-33, Asn-35, Lys-37, and Glu-42. May interact with the chromophore stretches follow at residues 47–57 (ASDIVINNLGA), 62–72 (AKRHKDAVEAF), and 107–117 (NEPTLIRIWGD). Residues Asp-124, Asp-126, Asn-128, Glu-135, Asp-160, Asp-162, Ser-164, Gln-166, and Glu-171 each contribute to the Ca(2+) site.

It belongs to the aequorin family. In terms of processing, the reduction of the disulfide bond is necessary to regenerate aequorin from apoaequorin.

Its function is as follows. Ca(2+)-dependent bioluminescence photoprotein. Displays an emission peak at 470 nm (blue light). Trace amounts of calcium ion trigger the intramolecular oxidation of the chromophore, coelenterazine into coelenteramide and CO(2) with the concomitant emission of light. This is Aequorin-2 from Aequorea victoria (Water jellyfish).